The sequence spans 504 residues: ATP synthase subunit alpha (504 aa).

169–176 (GDRQTGKT) serves as a coordination point for ATP.

This sequence belongs to the ATPase alpha/beta chains family. F-type ATPases have 2 components, CF(1) - the catalytic core - and CF(0) - the membrane proton channel. CF(1) has five subunits: alpha(3), beta(3), gamma(1), delta(1), epsilon(1). CF(0) has three main subunits: a(1), b(2) and c(9-12). The alpha and beta chains form an alternating ring which encloses part of the gamma chain. CF(1) is attached to CF(0) by a central stalk formed by the gamma and epsilon chains, while a peripheral stalk is formed by the delta and b chains.

Its subcellular location is the cell membrane. The catalysed reaction is ATP + H2O + 4 H(+)(in) = ADP + phosphate + 5 H(+)(out). Produces ATP from ADP in the presence of a proton gradient across the membrane. The alpha chain is a regulatory subunit. This chain is ATP synthase subunit alpha, found in Clostridium botulinum (strain Eklund 17B / Type B).